The primary structure comprises 36 residues: Neuropeptide F (36 aa).

Phenylalanine amide is present on Phe-36.

This sequence belongs to the NPY family. Central and peripheral nervous system, and muscular pharynx.

The protein resides in the secreted. In terms of biological role, may perform an important neurotransmitter function and may regulate muscular activity. This Arthurdendyus triangulatus (New Zealand flatworm) protein is Neuropeptide F.